A 474-amino-acid polypeptide reads, in one-letter code: Probable glycine dehydrogenase (decarboxylating) subunit 2 (474 aa).

Lysine 266 carries the N6-(pyridoxal phosphate)lysine modification.

This sequence belongs to the GcvP family. C-terminal subunit subfamily. As to quaternary structure, the glycine cleavage system is composed of four proteins: P, T, L and H. In this organism, the P 'protein' is a heterodimer of two subunits. It depends on pyridoxal 5'-phosphate as a cofactor.

It catalyses the reaction N(6)-[(R)-lipoyl]-L-lysyl-[glycine-cleavage complex H protein] + glycine + H(+) = N(6)-[(R)-S(8)-aminomethyldihydrolipoyl]-L-lysyl-[glycine-cleavage complex H protein] + CO2. Its function is as follows. The glycine cleavage system catalyzes the degradation of glycine. The P protein binds the alpha-amino group of glycine through its pyridoxal phosphate cofactor; CO(2) is released and the remaining methylamine moiety is then transferred to the lipoamide cofactor of the H protein. The protein is Probable glycine dehydrogenase (decarboxylating) subunit 2 of Thermus thermophilus (strain ATCC 27634 / DSM 579 / HB8).